A 130-amino-acid polypeptide reads, in one-letter code: MLKTLPPTLREKKRYVAFEIISESEFPQKEVVGIIRSAVLIYCGIHGCSKVNPWLIDYRHPSGILRVSREYLDLLRSSLMLFDEYKRNPINIRIIGVSNSVKHIREKFLHVSHEPYYKVIQKLKKRNLVK.

The protein belongs to the eukaryotic/archaeal RNase P protein component 2 family. As to quaternary structure, consists of a catalytic RNA component and at least 4-5 protein subunits.

Its subcellular location is the cytoplasm. The catalysed reaction is Endonucleolytic cleavage of RNA, removing 5'-extranucleotides from tRNA precursor.. Functionally, part of ribonuclease P, a protein complex that generates mature tRNA molecules by cleaving their 5'-ends. This chain is Ribonuclease P protein component 2, found in Methanococcus vannielii (strain ATCC 35089 / DSM 1224 / JCM 13029 / OCM 148 / SB).